The chain runs to 138 residues: Basic phospholipase A2 homolog Tpu-K49a (138 aa).

The signal sequence occupies residues 1 to 16; that stretch reads MRTLWIMAVLLVGVEG. Cystine bridges form between Cys-42–Cys-131, Cys-44–Cys-60, Cys-59–Cys-111, Cys-65–Cys-138, Cys-66–Cys-104, and Cys-91–Cys-102. The important for membrane-damaging activities in eukaryotes and bacteria; heparin-binding stretch occupies residues 121-133; it reads KKERINTKIFCKK.

Monomer. In terms of tissue distribution, expressed by the venom gland.

It is found in the secreted. Its function is as follows. Snake venom phospholipase A2 homolog that lacks catalytic activity. Induces local edema a few hours after injection in the hind foot. Is myotoxic. A model of myotoxic mechanism has been proposed: an apo Lys49-PLA2 is activated by the entrance of a hydrophobic molecule (e.g. fatty acid) at the hydrophobic channel of the protein leading to a reorientation of a monomer. This reorientation causes a transition between 'inactive' to 'active' states, causing alignment of C-terminal and membrane-docking sites (MDoS) side-by-side and putting the membrane-disruption sites (MDiS) in the same plane, exposed to solvent and in a symmetric position for both monomers. The MDoS region stabilizes the toxin on membrane by the interaction of charged residues with phospholipid head groups. Subsequently, the MDiS region destabilizes the membrane with penetration of hydrophobic residues. This insertion causes a disorganization of the membrane, allowing an uncontrolled influx of ions (i.e. calcium and sodium), and eventually triggering irreversible intracellular alterations and cell death. The chain is Basic phospholipase A2 homolog Tpu-K49a from Craspedocephalus puniceus (Flat-nosed pitviper).